The chain runs to 65 residues: Hirudin-2' (65 aa).

Residues 1–3 (ITY) form an interaction with thrombin active site region. 3 disulfides stabilise this stretch: Cys-6/Cys-14, Cys-16/Cys-28, and Cys-22/Cys-39. The disordered stretch occupies residues 39 to 65 (CVTGEGTPKPQSHNDGDFEEIPEEYLQ). Thr-45 carries an O-linked (GalNAc...) threonine glycan. The interval 55–65 (DFEEIPEEYLQ) is interaction with fibrinogen-binding exosite of thrombin. Residues 55–65 (DFEEIPEEYLQ) show a composition bias toward acidic residues. Sulfotyrosine is present on Tyr-63.

This sequence belongs to the protease inhibitor I14 (hirudin) family.

The protein localises to the secreted. Its function is as follows. Hirudin is a potent thrombin-specific protease inhibitor. It forms a stable non-covalent complex with alpha-thrombin, thereby abolishing its ability to cleave fibrinogen. The polypeptide is Hirudin-2' (Hirudo medicinalis (Medicinal leech)).